The following is a 192-amino-acid chain: Thymidine kinase (192 aa).

Residues 9-16 (SAMNAGKS) and 87-90 (DECQ) contribute to the ATP site. The active-site Proton acceptor is the Glu-88. Zn(2+) is bound by residues Cys-145, Cys-147, Cys-182, and His-185.

The protein belongs to the thymidine kinase family. In terms of assembly, homotetramer.

The protein localises to the cytoplasm. The enzyme catalyses thymidine + ATP = dTMP + ADP + H(+). The sequence is that of Thymidine kinase from Shewanella oneidensis (strain ATCC 700550 / JCM 31522 / CIP 106686 / LMG 19005 / NCIMB 14063 / MR-1).